We begin with the raw amino-acid sequence, 295 residues long: MDTIIEEYLKFIQLEKGLSSNTIGAYRRDLKKYNTFLELQKISHIDFIDRASIQQCLGYLHDNGASAKSLARFISTIRSFHQFALREKYAAKDPTVLIETPKYDRKLPDVLEINEVLALLETPNLAKINGYRDRTMLELLYATGMRVSELIQIELEDVNLIMGFVKVFGKGNKERIVPLGDTVIEYLKTYIETIRPQLLKKTVTNTLFLNMHGKPLSRQAIWKMIKQNAIKANITKSLTPHTLRHSFATHLLENGADLRAVQEMLGHSDISTTQLYTHVSKSQIRKMYNEFHPRA.

The 85-residue stretch at 1 to 85 (MDTIIEEYLK…TIRSFHQFAL (85 aa)) folds into the Core-binding (CB) domain. Residues 106-289 (KLPDVLEINE…SKSQIRKMYN (184 aa)) form the Tyr recombinase domain. Active-site residues include Arg146, Lys170, His241, Arg244, and His267. The O-(3'-phospho-DNA)-tyrosine intermediate role is filled by Tyr276.

This sequence belongs to the 'phage' integrase family. XerD subfamily. As to quaternary structure, forms a cyclic heterotetrameric complex composed of two molecules of XerC and two molecules of XerD.

It localises to the cytoplasm. Functionally, site-specific tyrosine recombinase, which acts by catalyzing the cutting and rejoining of the recombining DNA molecules. The XerC-XerD complex is essential to convert dimers of the bacterial chromosome into monomers to permit their segregation at cell division. It also contributes to the segregational stability of plasmids. In Staphylococcus saprophyticus subsp. saprophyticus (strain ATCC 15305 / DSM 20229 / NCIMB 8711 / NCTC 7292 / S-41), this protein is Tyrosine recombinase XerD.